Here is a 351-residue protein sequence, read N- to C-terminus: Uroporphyrinogen decarboxylase (351 aa).

Substrate is bound by residues 25–29 (RQAGR), Asp-74, Tyr-151, Ser-206, and His-325.

It belongs to the uroporphyrinogen decarboxylase family. Homodimer.

It is found in the cytoplasm. The catalysed reaction is uroporphyrinogen III + 4 H(+) = coproporphyrinogen III + 4 CO2. It participates in porphyrin-containing compound metabolism; protoporphyrin-IX biosynthesis; coproporphyrinogen-III from 5-aminolevulinate: step 4/4. Functionally, catalyzes the decarboxylation of four acetate groups of uroporphyrinogen-III to yield coproporphyrinogen-III. This chain is Uroporphyrinogen decarboxylase, found in Chlorobium luteolum (strain DSM 273 / BCRC 81028 / 2530) (Pelodictyon luteolum).